Consider the following 183-residue polypeptide: ATP-dependent protease subunit HslV (183 aa).

Thr-13 is a catalytic residue. The Na(+) site is built by Gly-168, Cys-171, and Thr-174.

The protein belongs to the peptidase T1B family. HslV subfamily. As to quaternary structure, a double ring-shaped homohexamer of HslV is capped on each side by a ring-shaped HslU homohexamer. The assembly of the HslU/HslV complex is dependent on binding of ATP.

Its subcellular location is the cytoplasm. It carries out the reaction ATP-dependent cleavage of peptide bonds with broad specificity.. With respect to regulation, allosterically activated by HslU binding. Functionally, protease subunit of a proteasome-like degradation complex believed to be a general protein degrading machinery. The polypeptide is ATP-dependent protease subunit HslV (Xanthomonas axonopodis pv. citri (strain 306)).